The chain runs to 202 residues: ATP-dependent Clp protease proteolytic subunit (202 aa).

The active-site Nucleophile is the S101. Residue H126 is part of the active site.

The protein belongs to the peptidase S14 family. Component of the chloroplastic Clp protease core complex.

It localises to the plastid. It is found in the chloroplast stroma. The catalysed reaction is Hydrolysis of proteins to small peptides in the presence of ATP and magnesium. alpha-casein is the usual test substrate. In the absence of ATP, only oligopeptides shorter than five residues are hydrolyzed (such as succinyl-Leu-Tyr-|-NHMec, and Leu-Tyr-Leu-|-Tyr-Trp, in which cleavage of the -Tyr-|-Leu- and -Tyr-|-Trp bonds also occurs).. Its function is as follows. Cleaves peptides in various proteins in a process that requires ATP hydrolysis. Has a chymotrypsin-like activity. Plays a major role in the degradation of misfolded proteins. The chain is ATP-dependent Clp protease proteolytic subunit from Liriodendron tulipifera (Tuliptree).